Here is a 255-residue protein sequence, read N- to C-terminus: Probable iron chelatin transport ATP-binding protein HP_0888 (255 aa).

Positions 3-240 (LEVKNLSFKY…HNLSALYDTP (238 aa)) constitute an ABC transporter domain. Residue 35-42 (APNGSGKT) participates in ATP binding.

It belongs to the ABC transporter superfamily.

It localises to the cell inner membrane. In terms of biological role, part of a binding-protein-dependent transport system for an iron chelatin. Probably responsible for energy coupling to the transport system (Potential). In Helicobacter pylori (strain ATCC 700392 / 26695) (Campylobacter pylori), this protein is Probable iron chelatin transport ATP-binding protein HP_0888.